We begin with the raw amino-acid sequence, 999 residues long: Hypoxia up-regulated protein 1 (999 aa).

The first 32 residues, 1–32 (MAATVRRQRPRRLLCWALVAVLLADLLALSDT), serve as a signal peptide directing secretion. N-linked (GlcNAc...) asparagine glycans are attached at residues Asn155, Asn222, and Asn515. The tract at residues 564–694 (VEDSPEEEST…KKQKPARKQK (131 aa)) is disordered. Phosphoserine is present on Ser567. Positions 574 to 583 (LTKLGNTISS) are enriched in polar residues. N-linked (GlcNAc...) asparagine glycosylation is present at Asn596. 2 stretches are compositionally biased toward basic and acidic residues: residues 611-626 (GSKD…KEEA) and 641-668 (PKGD…KPNE). Residues Asn830, Asn862, and Asn869 are each glycosylated (N-linked (GlcNAc...) asparagine). At Lys883 the chain carries N6-acetyllysine. The segment at 909–999 (AKFTKPRPRP…QKRPLKNDEL (91 aa)) is disordered. Residues Asn922 and Asn931 are each glycosylated (N-linked (GlcNAc...) asparagine). Over residues 949 to 962 (EEAKAILEPDKEGL) the composition is skewed to basic and acidic residues. Positions 996 to 999 (NDEL) match the Prevents secretion from ER motif.

It belongs to the heat shock protein 70 family. As to quaternary structure, part of a large chaperone multiprotein complex comprising DNAJB11, HSP90B1, HSPA5, HYOU, PDIA2, PDIA4, PDIA6, PPIB, SDF2L1, UGGT1 and very small amounts of ERP29, but not, or at very low levels, CALR nor CANX. As to expression, selectively expressed by cultured astrocytes but not endothelial cells, microglia or neurons.

It localises to the endoplasmic reticulum lumen. Functionally, has a pivotal role in cytoprotective cellular mechanisms triggered by oxygen deprivation. Promotes HSPA5/BiP-mediated ATP nucleotide exchange and thereby activates the unfolded protein response (UPR) pathway in the presence of endoplasmic reticulum stress. May play a role as a molecular chaperone and participate in protein folding. This Rattus norvegicus (Rat) protein is Hypoxia up-regulated protein 1 (Hyou1).